The following is a 329-amino-acid chain: Serine dehydratase-like (329 aa).

The residue at position 1 (methionine 1) is an N-acetylmethionine. Lysine 48 carries the N6-(pyridoxal phosphate)lysine modification.

This sequence belongs to the serine/threonine dehydratase family. In terms of assembly, monomer. Homodimer. Pyridoxal 5'-phosphate serves as cofactor. As to expression, expressed in lung cancer cell lines.

The enzyme catalyses L-serine = pyruvate + NH4(+). It carries out the reaction L-threonine = 2-oxobutanoate + NH4(+). It catalyses the reaction L-glutamate = D-glutamate. Catalyzes the pyridoxal-phosphate-dependent dehydrative deamination of L-threonine and L-serine to ammonia and alpha-ketobutyrate and pyruvate, respectively. Also exhibits racemase activity towards L-glutamate and D-glutamate. This Homo sapiens (Human) protein is Serine dehydratase-like (SDSL).